The sequence spans 389 residues: Na(+)/H(+) antiporter NhaA 1 (389 aa).

12 helical membrane-spanning segments follow: residues 12–32 (VLNE…ALLV), 62–82 (FLLW…GLEL), 97–117 (IVLP…LFVL), 128–148 (GWAI…MMCG), 157–177 (IFLL…IAIF), 184–204 (IVAF…NILG), 220–240 (ISVL…AFFI), 260–280 (FWLA…VNLS), 282–302 (IDIG…LFVG), 305–325 (AGVF…LPQG), 331–351 (LYGV…IDGL), and 365–385 (LAIL…LKFF).

The protein belongs to the NhaA Na(+)/H(+) (TC 2.A.33) antiporter family.

It localises to the cell inner membrane. It carries out the reaction Na(+)(in) + 2 H(+)(out) = Na(+)(out) + 2 H(+)(in). Na(+)/H(+) antiporter that extrudes sodium in exchange for external protons. The protein is Na(+)/H(+) antiporter NhaA 1 of Campylobacter jejuni subsp. jejuni serotype O:23/36 (strain 81-176).